We begin with the raw amino-acid sequence, 181 residues long: Adenylate kinase (181 aa).

Position 7–15 (7–15 (GVAGVGKTT)) interacts with ATP.

It belongs to the archaeal adenylate kinase family.

It is found in the cytoplasm. It carries out the reaction AMP + ATP = 2 ADP. In Thermoplasma volcanium (strain ATCC 51530 / DSM 4299 / JCM 9571 / NBRC 15438 / GSS1), this protein is Adenylate kinase (adkA).